The following is a 473-amino-acid chain: Aspartyl/glutamyl-tRNA(Asn/Gln) amidotransferase subunit B (473 aa).

Belongs to the GatB/GatE family. GatB subfamily. As to quaternary structure, heterotrimer of A, B and C subunits.

The enzyme catalyses L-glutamyl-tRNA(Gln) + L-glutamine + ATP + H2O = L-glutaminyl-tRNA(Gln) + L-glutamate + ADP + phosphate + H(+). The catalysed reaction is L-aspartyl-tRNA(Asn) + L-glutamine + ATP + H2O = L-asparaginyl-tRNA(Asn) + L-glutamate + ADP + phosphate + 2 H(+). Allows the formation of correctly charged Asn-tRNA(Asn) or Gln-tRNA(Gln) through the transamidation of misacylated Asp-tRNA(Asn) or Glu-tRNA(Gln) in organisms which lack either or both of asparaginyl-tRNA or glutaminyl-tRNA synthetases. The reaction takes place in the presence of glutamine and ATP through an activated phospho-Asp-tRNA(Asn) or phospho-Glu-tRNA(Gln). The polypeptide is Aspartyl/glutamyl-tRNA(Asn/Gln) amidotransferase subunit B (Francisella tularensis subsp. mediasiatica (strain FSC147)).